We begin with the raw amino-acid sequence, 87 residues long: MASKASGGSTRNGRDSNSKRLGVKAFGGQFVKAGSIIIRQRGTKVHPGKNVGLGSDYTIFALKDGIVKFEEKGKKNFVSIEPVEASA.

A compositionally biased stretch (polar residues) spans 1-11 (MASKASGGSTR). Residues 1–21 (MASKASGGSTRNGRDSNSKRL) are disordered.

It belongs to the bacterial ribosomal protein bL27 family.

The protein is Large ribosomal subunit protein bL27 of Hydrogenobaculum sp. (strain Y04AAS1).